The chain runs to 440 residues: Ribosomal protein uS12 methylthiotransferase RimO (440 aa).

Residues 5-116 (PTIAISHLGC…IVSVIERAEQ (112 aa)) form the MTTase N-terminal domain. Residues cysteine 14, cysteine 50, cysteine 79, cysteine 154, cysteine 158, and cysteine 161 each contribute to the [4Fe-4S] cluster site. The Radical SAM core domain maps to 140-370 (TTTEGVAYLR…ALQQPISWRK (231 aa)). The 67-residue stretch at 372 to 438 (QQEVGKTVEV…EYDLFGQVVS (67 aa)) folds into the TRAM domain.

Belongs to the methylthiotransferase family. RimO subfamily. [4Fe-4S] cluster serves as cofactor.

It is found in the cytoplasm. It carries out the reaction L-aspartate(89)-[ribosomal protein uS12]-hydrogen + (sulfur carrier)-SH + AH2 + 2 S-adenosyl-L-methionine = 3-methylsulfanyl-L-aspartate(89)-[ribosomal protein uS12]-hydrogen + (sulfur carrier)-H + 5'-deoxyadenosine + L-methionine + A + S-adenosyl-L-homocysteine + 2 H(+). In terms of biological role, catalyzes the methylthiolation of an aspartic acid residue of ribosomal protein uS12. The protein is Ribosomal protein uS12 methylthiotransferase RimO of Nostoc sp. (strain PCC 7120 / SAG 25.82 / UTEX 2576).